Consider the following 475-residue polypeptide: Proton-coupled amino acid transporter 1 (475 aa).

Residues 1–15 (MSTQRLRNEDYHDYS) are compositionally biased toward basic and acidic residues. Residues 1 to 32 (MSTQRLRNEDYHDYSSTDVSPEESPSEGLGSF) form a disordered region. Over 1–50 (MSTQRLRNEDYHDYSSTDVSPEESPSEGLGSFSPGSYQRLGENSSMTWFQ) the chain is Cytoplasmic. The helical transmembrane segment at 51 to 71 (TLIHLLKGNIGTGLLGLPLAV) threads the bilayer. The Extracellular portion of the chain corresponds to 72–77 (KNAGLL). Residues 78-98 (LGPLSLLVIGIVAVHCMGILV) traverse the membrane as a helical segment. Residues 99 to 140 (KCAHHLCRRLNKPFLDYGDTVMYGLECSPSTWIRNHSHWGRR) are Cytoplasmic-facing. A helical transmembrane segment spans residues 141 to 161 (IVDFFLVVTQLGFCCVYFVFL). The Extracellular portion of the chain corresponds to 162-189 (ADNFKQVIEAANGTTTNCNNNETVILTP). N-linked (GlcNAc...) asparagine glycans are attached at residues Asn173 and Asn182. A disulfide bridge connects residues Cys179 and Cys328. The helical transmembrane segment at 190 to 210 (TMDSRLYMLTFLPFLVLLSFI) threads the bilayer. The Cytoplasmic portion of the chain corresponds to 211–214 (RNLR). A helical membrane pass occupies residues 215–235 (ILSIFSLLANISMFVSLIMIY). The Extracellular portion of the chain corresponds to 236 to 256 (QFIVQRIPDPSHLPLVAPWKT). The helical transmembrane segment at 257–277 (YPLFFGTAIFAFEGIGVVLPL) threads the bilayer. Residues 278–288 (ENKMKDSQKFP) are Cytoplasmic-facing. Residues 289-309 (LILYLGMAIITVLYISLGSLG) traverse the membrane as a helical segment. At 310–341 (YLQFGADIKGSITLNLPNCWLYQSVKLLYSIG) the chain is on the extracellular side. The helical transmembrane segment at 342 to 362 (IFFTYALQFYVAAEIIIPAIV) threads the bilayer. The Cytoplasmic segment spans residues 363 to 371 (SRVPERFEL). Residues 372-392 (VVDLSARTAMVCVTCVLAVLI) form a helical membrane-spanning segment. At 393–396 (PRLD) the chain is on the extracellular side. Residues 397–417 (LVISLVGSVSSSALALIIPPL) traverse the membrane as a helical segment. Topologically, residues 418–438 (LEVTTYYGEGISPLTITKDAL) are cytoplasmic. The helical transmembrane segment at 439–459 (ISILGFVGFVVGTYESLWELI) threads the bilayer. Over 460–475 (QPSHSDSSTNSTSAFI) the chain is Extracellular. A glycan (N-linked (GlcNAc...) asparagine) is linked at Asn469.

Belongs to the amino acid/polyamine transporter 2 family. Widely expressed and predominantly expressed in brain. Within the brain, expression restricted to neurons and not detected in glial cells. Abundant in regions rich in neurons using glutamate and GABA such as Purkinje cells in the cerebellum and pyramidal cells in the hippocampus.

The protein resides in the cell membrane. It localises to the apical cell membrane. The protein localises to the lysosome membrane. The enzyme catalyses glycine(in) + H(+)(in) = glycine(out) + H(+)(out). It catalyses the reaction L-proline(out) + H(+)(out) = L-proline(in) + H(+)(in). It carries out the reaction D-proline(out) + H(+)(out) = D-proline(in) + H(+)(in). The catalysed reaction is L-alanine(in) + H(+)(in) = L-alanine(out) + H(+)(out). The enzyme catalyses D-alanine(in) + H(+)(in) = D-alanine(out) + H(+)(out). It catalyses the reaction L-serine(in) + H(+)(in) = L-serine(out) + H(+)(out). It carries out the reaction D-serine(out) + H(+)(out) = D-serine(in) + H(+)(in). The catalysed reaction is 4-aminobutanoate(in) + H(+)(in) = 4-aminobutanoate(out) + H(+)(out). The enzyme catalyses beta-alanine(in) + H(+)(in) = beta-alanine(out) + H(+)(out). Electrogenic proton/amino acid symporter with selectivity for small apolar L-amino acids, their D-enantiomers and selected amino acid derivatives such as 4-aminobutanoate/GABA. May be involved in the efflux from the lysosomal compartment of neutral amino acids resulting from proteolysis. May play a role in specifying sites for exocytosis in neurons. The protein is Proton-coupled amino acid transporter 1 of Rattus norvegicus (Rat).